The sequence spans 662 residues: p-hydroxybenzoic acid efflux pump subunit AaeB (662 aa).

11 consecutive transmembrane segments (helical) span residues 22–42 (FAFK…HLQL), 52–72 (AAIV…SGAI), 78–98 (LRIV…ISTI), 102–122 (IVMM…SSLV), 129–149 (IFGL…GTPM), 161–181 (EIVL…PRSI), 378–398 (LFWL…IAVV), 415–435 (FLYG…FILP), 439–459 (QSIL…GVEV), 467–487 (LGAL…TFNI), and 491–511 (LDNA…ILLI).

Belongs to the aromatic acid exporter ArAE (TC 2.A.85) family.

The protein resides in the cell inner membrane. Forms an efflux pump with AaeA. Could function as a metabolic relief valve, allowing to eliminate certain compounds when they accumulate to high levels in the cell. The chain is p-hydroxybenzoic acid efflux pump subunit AaeB from Pectobacterium parmentieri (strain WPP163) (Pectobacterium wasabiae (strain WPP163)).